The sequence spans 190 residues: Vascular endothelial growth factor A (190 aa).

The signal sequence occupies residues 1-26 (MNFLLSWVHWSLALLLYLHHAKWSQA). 3 disulfide bridges follow: C51–C93, C82–C127, and C86–C129. N100 carries an N-linked (GlcNAc...) asparagine glycan.

It belongs to the PDGF/VEGF growth factor family. In terms of assembly, homodimer; disulfide-linked. Also found as heterodimer with PGF. Interacts with NRP1. Interacts with isoform 2 of BSG. Interacts with CD82; this interaction inhibits VEGFA-mediated signaling pathway.

Its subcellular location is the secreted. Functionally, growth factor active in angiogenesis, vasculogenesis and endothelial cell growth. Induces endothelial cell proliferation, promotes cell migration, inhibits apoptosis and induces permeabilization of blood vessels. Binds to the FLT1/VEGFR1 and KDR/VEGFR2 receptors, heparan sulfate and heparin. Binding to NRP1 receptor initiates a signaling pathway needed for motor neuron axon guidance and cell body migration, including for the caudal migration of facial motor neurons from rhombomere 4 to rhombomere 6 during embryonic development. Also binds the DEAR/FBXW7-AS1 receptor. This chain is Vascular endothelial growth factor A (VEGFA), found in Equus caballus (Horse).